Reading from the N-terminus, the 701-residue chain is L-glutamate oxidase precursor (701 aa).

The signal sequence occupies residues 1-14 (MTTDTARRHTGAER). Residues A69, E88, A89, R97, M123, R124, M354, and S409 each contribute to the FAD site. The propeptide occupies 481–520 (LALPQSVRNLPTGLLGAHPSVDESRIGEEQVEYYRNSELR). E645, W653, and I654 together coordinate FAD. Positions 684–701 (RRGAAAATEPMREEALTS) are excised as a propeptide.

Belongs to the flavin monoamine oxidase family. LGOX subfamily. As to quaternary structure, the LGOX precursor forms homodimers. The mature enzyme is a heterohexamer composed of 2 alpha chains, 2 beta chains and 2 gamma chains (alpha2beta2gamma2). The cofactor is FAD. In terms of processing, the precursor form is proteolytically cleaved by an endopeptidase into alpha, beta and gamma chains, which form the stable mature enzyme. Activation by proteolysis occurs after secretion.

Its subcellular location is the secreted. It carries out the reaction L-glutamate + O2 + H2O = H2O2 + 2-oxoglutarate + NH4(+). Produced as a single polypeptide precursor and is activated by proteolytic cleavage. The LGOX precursor is an active enzyme, but it exhibits lower catalytic efficiency and lower thermostability compared with the mature hexameric LGOX. The mature form is strongly inhibited by p-chloromercuribenzoate, but not by CuCl(2), EDTA and diethyldithiocarbamate. In terms of biological role, catalyzes the oxidative deamination of L-glutamate to 2-ketoglutarate along with the production of ammonia and hydrogen peroxide. Shows strict substrate specificity for L-glutamate, and exhibits only very weak activity with L-aspartate. In Streptomyces sp, this protein is L-glutamate oxidase precursor.